The sequence spans 578 residues: Malonate--CoA ligase ACSF3, mitochondrial (578 aa).

A mitochondrion-targeting transit peptide spans 1–19 (MRVGAFLGRSLFSCSHVRG). Position 205-213 (205-213 (TSGTTGRPK)) interacts with ATP. Residues 394 to 413 (QNPRKEGTSYTTHAQGDSTG) form a disordered region. Residues Asp-459, Arg-473, and Lys-565 each contribute to the ATP site.

Belongs to the ATP-dependent AMP-binding enzyme family.

The protein resides in the mitochondrion. It carries out the reaction tetracosanoate + ATP + CoA = tetracosanoyl-CoA + AMP + diphosphate. The catalysed reaction is malonate + ATP + CoA = malonyl-CoA + AMP + diphosphate. Catalyzes the initial reaction in intramitochondrial fatty acid synthesis, by activating malonate and methylmalonate, but not acetate, into their respective CoA thioester. May have some preference toward very-long-chain substrates. This is Malonate--CoA ligase ACSF3, mitochondrial from Xenopus laevis (African clawed frog).